We begin with the raw amino-acid sequence, 1293 residues long: Phosphoribosylformylglycinamidine synthase (1293 aa).

ATP-binding positions include 305-316 (GAATGSGGEIRD), 384-386 (TGY), and alanine 676. Residues 307–326 (ATGSGGEIRDEGATGRGSKP) are disordered. The Mg(2+) site is built by aspartate 677, glutamate 716, asparagine 720, and aspartate 884. ATP is bound at residue serine 886. The 254-residue stretch at 1040–1293 (MAILREQGVN…MFRNARVKIG (254 aa)) folds into the Glutamine amidotransferase type-1 domain. Catalysis depends on cysteine 1133, which acts as the Nucleophile. Residues histidine 1258 and glutamate 1260 contribute to the active site.

In the N-terminal section; belongs to the FGAMS family. In terms of assembly, monomer.

It is found in the cytoplasm. It carries out the reaction N(2)-formyl-N(1)-(5-phospho-beta-D-ribosyl)glycinamide + L-glutamine + ATP + H2O = 2-formamido-N(1)-(5-O-phospho-beta-D-ribosyl)acetamidine + L-glutamate + ADP + phosphate + H(+). The protein operates within purine metabolism; IMP biosynthesis via de novo pathway; 5-amino-1-(5-phospho-D-ribosyl)imidazole from N(2)-formyl-N(1)-(5-phospho-D-ribosyl)glycinamide: step 1/2. Functionally, phosphoribosylformylglycinamidine synthase involved in the purines biosynthetic pathway. Catalyzes the ATP-dependent conversion of formylglycinamide ribonucleotide (FGAR) and glutamine to yield formylglycinamidine ribonucleotide (FGAM) and glutamate. This Shewanella frigidimarina (strain NCIMB 400) protein is Phosphoribosylformylglycinamidine synthase.